Reading from the N-terminus, the 402-residue chain is Acyl-[acyl-carrier-protein] desaturase 3, chloroplastic (402 aa).

A chloroplast-targeting transit peptide spans 1-32 (MSLTGCLPPRPPCSMRRRTSGGGASVSPVVAM). Residues 1–66 (MSLTGCLPPR…EVPPQVTHTL (66 aa)) are disordered. Fe cation is bound by residues E139, E178, H181, E231, E264, and H267.

This sequence belongs to the fatty acid desaturase type 2 family. As to quaternary structure, homodimer. It depends on Fe(2+) as a cofactor.

The protein resides in the plastid. Its subcellular location is the chloroplast. It functions in the pathway lipid metabolism; fatty acid metabolism. Introduces a cis double bond in the acyl chain of an acyl-[acyl-carrier protein]. The polypeptide is Acyl-[acyl-carrier-protein] desaturase 3, chloroplastic (Oryza sativa subsp. japonica (Rice)).